A 150-amino-acid chain; its full sequence is 3-hydroxyacyl-[acyl-carrier-protein] dehydratase FabZ (150 aa).

His-51 is an active-site residue.

Belongs to the thioester dehydratase family. FabZ subfamily.

The protein resides in the cytoplasm. The catalysed reaction is a (3R)-hydroxyacyl-[ACP] = a (2E)-enoyl-[ACP] + H2O. In terms of biological role, involved in unsaturated fatty acids biosynthesis. Catalyzes the dehydration of short chain beta-hydroxyacyl-ACPs and long chain saturated and unsaturated beta-hydroxyacyl-ACPs. The polypeptide is 3-hydroxyacyl-[acyl-carrier-protein] dehydratase FabZ (Geobacter metallireducens (strain ATCC 53774 / DSM 7210 / GS-15)).